The primary structure comprises 337 residues: Interferon gamma receptor 2 (337 aa).

The signal sequence occupies residues 1–21 (MRPTLLWSLLLLLGVFAAAAA). The Extracellular segment spans residues 28–247 (SQLPAPQHPK…MADASTELQQ (220 aa)). The Fibronectin type-III 1 domain occupies 31–129 (PAPQHPKIRL…GALHSAWVTM (99 aa)). 2 N-linked (GlcNAc...) asparagine glycosylation sites follow: Asn-56 and Asn-85. The cysteines at positions 86 and 94 are disulfide-linked. N-linked (GlcNAc...) asparagine glycosylation is found at Asn-110, Asn-137, Asn-219, and Asn-231. One can recognise a Fibronectin type-III 2 domain in the interval 142 to 240 (PPENIEVTPG…NISCYETMAD (99 aa)). An intrachain disulfide couples Cys-209 to Cys-234. The chain crosses the membrane as a helical span at residues 248–268 (VILISVGTFSLLSVLAGACFF). Over 269–337 (LVLKYRGLIK…KEQEDVLQTL (69 aa)) the chain is Cytoplasmic. Residues 276–277 (LI) carry the Dileucine internalization motif motif.

Belongs to the type II cytokine receptor family. As to quaternary structure, heterodimer with IFNGR1, to form the IFNG receptor complex. Interacts (via intracellular domain) with JAK2. Expressed in T-cells (at protein level).

It is found in the cell membrane. It localises to the cytoplasmic vesicle membrane. Its subcellular location is the golgi apparatus membrane. The protein resides in the endoplasmic reticulum membrane. The protein localises to the cytoplasm. Associates with IFNGR1 to form a receptor for the cytokine interferon gamma (IFNG). Ligand binding stimulates activation of the JAK/STAT signaling pathway. Required for signal transduction in contrast to other receptor subunit responsible for ligand binding. The chain is Interferon gamma receptor 2 from Homo sapiens (Human).